Here is a 363-residue protein sequence, read N- to C-terminus: Wortmanamides biosynthesis cluster protein C (363 aa).

7 consecutive transmembrane segments (helical) span residues 15–35 (FVTLLIFTPLGIVVTALRFVA), 48–68 (WLAVIATIFFILTNLAGLMAI), 95–115 (IAGLFFYFAQTLSVKLSILAF), 129–149 (ICIYLLAAAQTILFIAFCIFQ), 175–195 (ILGGELPNSLVDFAMVILAMI), 210–230 (VTVLFGLGFVVGIIGFVKIAV), and 237–257 (LYAFSMIALWTGVQMFTALLC). A disordered region spans residues 293-312 (SSSKNSRKHGPYDSDQSPGP). Asn321 carries an N-linked (GlcNAc...) asparagine glycan. Positions 344–363 (SPITHPQAYSKQTTRQFDVV) are disordered.

Belongs to the SAT4 family.

The protein resides in the membrane. The protein operates within secondary metabolite biosynthesis. Its function is as follows. Part of the gene cluster that mediates the biosynthesis of wortmanamides A and B, reduced long-chain polyketides amidated with a specific omega-amino acid, 5-aminopentanoic acid (5PA). The PKS modules of TwmB are involved in the synthesis of the polyketide backbone, whereas the non-canonical C domain of TwmB is a bonafide condensation domain that specifically selects 5PA and catalyzes amidation to release polyketide chain. The C domain clearly prefers C16 and C18 fatty acyl substrates, which is consistent with simultaneous formation of both octaketide and nonaketide acyl amides wortmanamides A and B. Because TwmB lacks a designated enoylreductase (ER) domain, the required activity is provided the enoyl reductase TwmE. The roles of the remaining enzymes have still to be clarified. This Talaromyces wortmannii (Penicillium wortmannii) protein is Wortmanamides biosynthesis cluster protein C.